Consider the following 206-residue polypeptide: Large ribosomal subunit protein uL4 (206 aa).

A disordered region spans residues T48 to Y97. Over residues K63–R72 the composition is skewed to basic residues.

Belongs to the universal ribosomal protein uL4 family. Part of the 50S ribosomal subunit.

One of the primary rRNA binding proteins, this protein initially binds near the 5'-end of the 23S rRNA. It is important during the early stages of 50S assembly. It makes multiple contacts with different domains of the 23S rRNA in the assembled 50S subunit and ribosome. Functionally, forms part of the polypeptide exit tunnel. This Anaeromyxobacter dehalogenans (strain 2CP-C) protein is Large ribosomal subunit protein uL4.